The sequence spans 1595 residues: Pentafunctional AROM polypeptide (1595 aa).

Residues 1 to 384 are 3-dehydroquinate synthase; that stretch reads MGVPTKISIL…HEPRASTVSN (384 aa). NAD(+)-binding positions include 44–46, 81–84, 114–116, and D119; these read DTN, ESSK, and GGV. 7-phospho-2-dehydro-3-deoxy-D-arabino-heptonate is bound at residue R130. NAD(+) is bound at residue 139–140; it reads TT. 7-phospho-2-dehydro-3-deoxy-D-arabino-heptonate-binding residues include D146 and K152. K161 is an NAD(+) binding site. A 7-phospho-2-dehydro-3-deoxy-D-arabino-heptonate-binding site is contributed by N162. Residues 179–182 and N190 contribute to the NAD(+) site; that span reads FLNT. E194 contacts Zn(2+). 7-phospho-2-dehydro-3-deoxy-D-arabino-heptonate is bound by residues 194–197 and K250; that span reads EVIK. E260 (proton acceptor; for 3-dehydroquinate synthase activity) is an active-site residue. 7-phospho-2-dehydro-3-deoxy-D-arabino-heptonate contacts are provided by residues 264-268 and H271; that span reads RNLLN. Residue H271 participates in Zn(2+) binding. Residue H275 is the Proton acceptor; for 3-dehydroquinate synthase activity of the active site. Residues H287 and K356 each coordinate 7-phospho-2-dehydro-3-deoxy-D-arabino-heptonate. Residue H287 coordinates Zn(2+). Residues 397-842 are EPSP synthase; it reads VSPGVPKGLD…WDSLAQTFKV (446 aa). C824 acts as the For EPSP synthase activity in catalysis. Residues 866–1057 form a shikimate kinase region; that stretch reads ASIFIIGMRG…RRKENTFFVS (192 aa). 872–879 contributes to the ATP binding site; sequence GMRGAGKT. Residues 1058–1278 are 3-dehydroquinase; it reads LTLPDLGLAA…AAPGQLSARE (221 aa). The Proton acceptor; for 3-dehydroquinate dehydratase activity role is filled by H1181. K1209 serves as the catalytic Schiff-base intermediate with substrate; for 3-dehydroquinate dehydratase activity. The interval 1291–1595 is shikimate dehydrogenase; it reads AKKFAVIGNP…MGVLPSEDIS (305 aa).

The protein in the N-terminal section; belongs to the sugar phosphate cyclases superfamily. Dehydroquinate synthase family. In the 2nd section; belongs to the EPSP synthase family. This sequence in the 3rd section; belongs to the shikimate kinase family. It in the 4th section; belongs to the type-I 3-dehydroquinase family. The protein in the C-terminal section; belongs to the shikimate dehydrogenase family. In terms of assembly, homodimer. Requires Zn(2+) as cofactor.

The protein resides in the cytoplasm. It carries out the reaction 7-phospho-2-dehydro-3-deoxy-D-arabino-heptonate = 3-dehydroquinate + phosphate. It catalyses the reaction 3-dehydroquinate = 3-dehydroshikimate + H2O. The enzyme catalyses shikimate + NADP(+) = 3-dehydroshikimate + NADPH + H(+). The catalysed reaction is shikimate + ATP = 3-phosphoshikimate + ADP + H(+). It carries out the reaction 3-phosphoshikimate + phosphoenolpyruvate = 5-O-(1-carboxyvinyl)-3-phosphoshikimate + phosphate. The protein operates within metabolic intermediate biosynthesis; chorismate biosynthesis; chorismate from D-erythrose 4-phosphate and phosphoenolpyruvate: step 2/7. It participates in metabolic intermediate biosynthesis; chorismate biosynthesis; chorismate from D-erythrose 4-phosphate and phosphoenolpyruvate: step 3/7. It functions in the pathway metabolic intermediate biosynthesis; chorismate biosynthesis; chorismate from D-erythrose 4-phosphate and phosphoenolpyruvate: step 4/7. Its pathway is metabolic intermediate biosynthesis; chorismate biosynthesis; chorismate from D-erythrose 4-phosphate and phosphoenolpyruvate: step 5/7. The protein operates within metabolic intermediate biosynthesis; chorismate biosynthesis; chorismate from D-erythrose 4-phosphate and phosphoenolpyruvate: step 6/7. Functionally, the AROM polypeptide catalyzes 5 consecutive enzymatic reactions in prechorismate polyaromatic amino acid biosynthesis. This chain is Pentafunctional AROM polypeptide, found in Ajellomyces capsulatus (strain H143) (Darling's disease fungus).